We begin with the raw amino-acid sequence, 155 residues long: uncharacterized protein (155 aa).

A signal peptide spans 1 to 23 (MTILSLSRFMLAGVLLASFNASA).

It to E.coli YfjT.

This is an uncharacterized protein from Escherichia coli (strain K12).